A 258-amino-acid chain; its full sequence is Acyl-[acyl-carrier-protein]--UDP-N-acetylglucosamine O-acyltransferase (258 aa).

The protein belongs to the transferase hexapeptide repeat family. LpxA subfamily. In terms of assembly, homotrimer.

It localises to the cytoplasm. The catalysed reaction is a (3R)-hydroxyacyl-[ACP] + UDP-N-acetyl-alpha-D-glucosamine = a UDP-3-O-[(3R)-3-hydroxyacyl]-N-acetyl-alpha-D-glucosamine + holo-[ACP]. Its pathway is glycolipid biosynthesis; lipid IV(A) biosynthesis; lipid IV(A) from (3R)-3-hydroxytetradecanoyl-[acyl-carrier-protein] and UDP-N-acetyl-alpha-D-glucosamine: step 1/6. In terms of biological role, involved in the biosynthesis of lipid A, a phosphorylated glycolipid that anchors the lipopolysaccharide to the outer membrane of the cell. This Neisseria meningitidis serogroup C / serotype 2a (strain ATCC 700532 / DSM 15464 / FAM18) protein is Acyl-[acyl-carrier-protein]--UDP-N-acetylglucosamine O-acyltransferase.